A 128-amino-acid polypeptide reads, in one-letter code: Cytochrome b (128 aa).

The next 3 helical transmembrane spans lie at Phe25–Ile45, Trp69–Ile90, and Trp105–Tyr125. Heme b contacts are provided by His75 and His89. Residue His126 participates in a ubiquinone binding.

It belongs to the cytochrome b family. The cytochrome bc1 complex contains 3 respiratory subunits (MT-CYB, CYC1 and UQCRFS1), 2 core proteins (UQCRC1 and UQCRC2) and probably 6 low-molecular weight proteins. Heme b serves as cofactor.

Its subcellular location is the mitochondrion inner membrane. Its function is as follows. Component of the ubiquinol-cytochrome c reductase complex (complex III or cytochrome b-c1 complex) that is part of the mitochondrial respiratory chain. The b-c1 complex mediates electron transfer from ubiquinol to cytochrome c. Contributes to the generation of a proton gradient across the mitochondrial membrane that is then used for ATP synthesis. In Crotalus viridis viridis (Prairie rattlesnake), this protein is Cytochrome b (MT-CYB).